Reading from the N-terminus, the 380-residue chain is Ceramide synthase 2 (380 aa).

The Lumenal segment spans residues 1–40 (MLQTLHDYFWWERLWLPVNLTWADLEDRDGRVYAKASDLY). The N-linked (GlcNAc...) asparagine glycan is linked to Asn19. Residues 41–61 (ITLPLALLFLIIRYFFELYVA) traverse the membrane as a helical segment. A homeobox-like region spans residues 67–128 (LLNVKEKTRL…RRRRNQDRPS (62 aa)). A TLC domain is found at 131–332 (KKFREASWRF…ILRMAHKFIT (202 aa)). The next 4 membrane-spanning stretches (helical) occupy residues 140–160 (FTFYLIAFIAGTAVIVDKPWF), 181–201 (WYYMIELSFYWSLLFSIASDV), 209–229 (QIIHHVATIILISFSWFANYV), and 264–284 (IFIVFAIVFIITRLVILPFWI). The Last loop motif motif lies at 291–300 (YPLELYPAFF). A helical transmembrane segment spans residues 304–324 (FFNFMMGVLQLLHIFWAYLIL). Residues 325-380 (RMAHKFITGKVVEDERSDREETESSEGEEAAAGGGAKNRPLANGHPILNNNHRKND) lie on the Cytoplasmic side of the membrane. A disordered region spans residues 338–380 (DERSDREETESSEGEEAAAGGGAKNRPLANGHPILNNNHRKND). At Ser341 the chain carries Phosphoserine. Residues 344 to 353 (EETESSEGEE) show a composition bias toward acidic residues. Thr346 bears the Phosphothreonine mark. Residues Ser348 and Ser349 each carry the phosphoserine modification.

As to quaternary structure, interacts with ATP6V0C, ASGR1, ASGR2 and SLC22A1/OCT1. Interacts with ELOV1, HSD17B12 and TECR. Interacts with NDUFS2. Post-translationally, acetylated. Deacetylation by SIRT3 increases enzyme activity and promotes mitochondrial ceramide accumulation. In terms of processing, phosphorylated at the C-terminus by CK2, leading to increase the ceramide synthase activity.

The protein localises to the endoplasmic reticulum membrane. It catalyses the reaction a very long-chain fatty acyl-CoA + a sphingoid base = an N-(very-long-chain fatty acyl)-sphingoid base + CoA + H(+). The enzyme catalyses docosanoyl-CoA + sphinganine = N-docosanoylsphinganine + CoA + H(+). The catalysed reaction is tetracosanoyl-CoA + sphinganine = N-tetracosanoylsphinganine + CoA + H(+). It carries out the reaction hexacosanoyl-CoA + sphinganine = N-hexacosanoylsphinganine + CoA + H(+). It catalyses the reaction (15Z)-tetracosenoyl-CoA + sphinganine = N-(15Z-tetracosenoyl)-sphinganine + CoA + H(+). The enzyme catalyses 2-hydroxytetracosanoyl-CoA + sphinganine = N-(2-hydroxytetracosanoyl)-sphinganine + CoA + H(+). The catalysed reaction is 2-hydroxydocosanoyl-CoA + sphinganine = N-(2-hydroxydocosanoyl)-sphinganine + CoA + H(+). It carries out the reaction 2-hydroxytetracosenoyl-CoA + sphinganine = N-(2-hydroxytetracosenoyl)-sphinganine + CoA + H(+). It catalyses the reaction tetracosenoyl-CoA + sphinganine = an N-tetracosenoylsphinganine + CoA + H(+). The enzyme catalyses hexacosenoyl-CoA + sphinganine = N-hexacosenoylsphinganine + CoA + H(+). The catalysed reaction is tetracosanoyl-CoA + sphing-4-enine = N-tetracosanoyl-sphing-4-enine + CoA + H(+). It carries out the reaction tetracosenoyl-CoA + sphing-4-enine = N-(tetracosenoyl)-sphing-4-enine + CoA + H(+). It catalyses the reaction heptadecasphing-4-enine + tetracosanoyl-CoA = N-tetracosanoyl-heptadecasphing-4-enine + CoA + H(+). The enzyme catalyses a fatty acyl-CoA + sphing-4-enine = an N-acylsphing-4-enine + CoA + H(+). The catalysed reaction is sphing-4-enine + hexadecanoyl-CoA = N-hexadecanoylsphing-4-enine + CoA + H(+). It carries out the reaction sphing-4-enine + octadecanoyl-CoA = N-octadecanoylsphing-4-enine + CoA + H(+). It catalyses the reaction eicosanoyl-CoA + sphing-4-enine = N-eicosanoyl-sphing-4-enine + CoA + H(+). The enzyme catalyses sphinganine + hexadecanoyl-CoA = N-hexadecanoylsphinganine + CoA + H(+). The catalysed reaction is sphinganine + octadecanoyl-CoA = N-(octadecanoyl)-sphinganine + CoA + H(+). It carries out the reaction sphinganine + (9Z)-octadecenoyl-CoA = N-(9Z-octadecenoyl)-sphinganine + CoA + H(+). It catalyses the reaction eicosanoyl-CoA + sphinganine = N-eicosanoylsphinganine + CoA + H(+). Its pathway is lipid metabolism; sphingolipid metabolism. Ceramide synthase activity is inhibited by sphingosine-1-phosphate. Functionally, ceramide synthase that catalyzes the transfer of the acyl chain from acyl-CoA to a sphingoid base, with high selectivity toward very-long-chain fatty acyl-CoA (chain length C22-C27). N-acylates sphinganine and sphingosine bases to form dihydroceramides and ceramides in de novo synthesis and salvage pathways, respectively. Plays a non-redundant role in the synthesis of ceramides with very-long-chain fatty acids in kidney, liver and brain. Regulates the abundance of myelin-specific sphingolipids galactosylceramide and sulfatide that affects myelin sheath architecture and motor neuron functions. In Bos taurus (Bovine), this protein is Ceramide synthase 2.